The primary structure comprises 195 residues: 7-methyl-GTP pyrophosphatase (195 aa).

Asp70 (proton acceptor) is an active-site residue.

The protein belongs to the Maf family. YceF subfamily. The cofactor is a divalent metal cation.

Its subcellular location is the cytoplasm. The catalysed reaction is N(7)-methyl-GTP + H2O = N(7)-methyl-GMP + diphosphate + H(+). Nucleoside triphosphate pyrophosphatase that hydrolyzes 7-methyl-GTP (m(7)GTP). May have a dual role in cell division arrest and in preventing the incorporation of modified nucleotides into cellular nucleic acids. This chain is 7-methyl-GTP pyrophosphatase, found in Shewanella sp. (strain MR-4).